Reading from the N-terminus, the 361-residue chain is 3-dehydroquinate synthase (361 aa).

NAD(+) is bound by residues Asn41, 70–75 (DGEQYK), 104–108 (GVIGD), 128–129 (TT), Lys141, Lys150, 150–151 (KN), and 168–171 (CLTT). Positions 183, 246, and 263 each coordinate Zn(2+).

The protein belongs to the sugar phosphate cyclases superfamily. Dehydroquinate synthase family. Requires NAD(+) as cofactor. It depends on Co(2+) as a cofactor. Zn(2+) serves as cofactor.

The protein resides in the cytoplasm. It carries out the reaction 7-phospho-2-dehydro-3-deoxy-D-arabino-heptonate = 3-dehydroquinate + phosphate. It functions in the pathway metabolic intermediate biosynthesis; chorismate biosynthesis; chorismate from D-erythrose 4-phosphate and phosphoenolpyruvate: step 2/7. Catalyzes the conversion of 3-deoxy-D-arabino-heptulosonate 7-phosphate (DAHP) to dehydroquinate (DHQ). The protein is 3-dehydroquinate synthase of Vibrio cholerae serotype O1 (strain ATCC 39315 / El Tor Inaba N16961).